A 39-amino-acid chain; its full sequence is Photosystem II reaction center protein L (39 aa).

A helical transmembrane segment spans residues 18–38 (SLYLGLLLTFVMGILFSSYFF).

The protein belongs to the PsbL family. In terms of assembly, PSII is composed of 1 copy each of membrane proteins PsbA, PsbB, PsbC, PsbD, PsbE, PsbF, PsbH, PsbI, PsbJ, PsbK, PsbL, PsbM, PsbT, PsbX, PsbY, Psb30/Ycf12, peripheral proteins PsbO, CyanoQ (PsbQ), PsbU, PsbV and a large number of cofactors. It forms dimeric complexes.

Its subcellular location is the cellular thylakoid membrane. One of the components of the core complex of photosystem II (PSII). PSII is a light-driven water:plastoquinone oxidoreductase that uses light energy to abstract electrons from H(2)O, generating O(2) and a proton gradient subsequently used for ATP formation. It consists of a core antenna complex that captures photons, and an electron transfer chain that converts photonic excitation into a charge separation. This subunit is found at the monomer-monomer interface and is required for correct PSII assembly and/or dimerization. The chain is Photosystem II reaction center protein L from Prochlorococcus marinus (strain MIT 9211).